The sequence spans 439 residues: Probable cinnamyl alcohol dehydrogenase 8C (439 aa).

Cysteine 120 contacts Zn(2+). NADP(+) is bound at residue threonine 122. Residues histidine 142, glutamate 143, cysteine 173, cysteine 176, cysteine 179, cysteine 187, and cysteine 239 each contribute to the Zn(2+) site. NADP(+) contacts are provided by residues threonine 243, 264–269 (GLGGLG), 287–292 (STSPGK), threonine 327, glycine 351, and 374–376 (NCV).

It belongs to the zinc-containing alcohol dehydrogenase family. In terms of assembly, homodimer. It depends on Zn(2+) as a cofactor.

The enzyme catalyses (E)-cinnamyl alcohol + NADP(+) = (E)-cinnamaldehyde + NADPH + H(+). The catalysed reaction is (E)-coniferol + NADP(+) = (E)-coniferaldehyde + NADPH + H(+). It carries out the reaction (E)-sinapyl alcohol + NADP(+) = (E)-sinapaldehyde + NADPH + H(+). It catalyses the reaction (E)-4-coumaroyl alcohol + NADP(+) = (E)-4-coumaraldehyde + NADPH + H(+). The enzyme catalyses (E)-caffeyl alcohol + NADP(+) = (E)-caffeyl aldehyde + NADPH + H(+). Its pathway is aromatic compound metabolism; phenylpropanoid biosynthesis. In terms of biological role, involved in lignin biosynthesis. Catalyzes the final step specific for the production of lignin monomers. Catalyzes the NADPH-dependent reduction of coniferaldehyde, 5-hydroxyconiferaldehyde, sinapaldehyde, 4-coumaraldehyde and caffeyl aldehyde to their respective alcohols. The polypeptide is Probable cinnamyl alcohol dehydrogenase 8C (Oryza sativa subsp. japonica (Rice)).